The following is a 367-amino-acid chain: Alanine racemase (367 aa).

The active-site Proton acceptor; specific for D-alanine is the lysine 40. Lysine 40 carries the post-translational modification N6-(pyridoxal phosphate)lysine. Arginine 136 lines the substrate pocket. Tyrosine 263 serves as the catalytic Proton acceptor; specific for L-alanine. A substrate-binding site is contributed by methionine 310.

It belongs to the alanine racemase family. Requires pyridoxal 5'-phosphate as cofactor.

It carries out the reaction L-alanine = D-alanine. The protein operates within amino-acid biosynthesis; D-alanine biosynthesis; D-alanine from L-alanine: step 1/1. Functionally, catalyzes the interconversion of L-alanine and D-alanine. May also act on other amino acids. The protein is Alanine racemase (alr) of Streptococcus pneumoniae (strain Taiwan19F-14).